Here is a 249-residue protein sequence, read N- to C-terminus: 2,3-bisphosphoglycerate-dependent phosphoglycerate mutase 2 (249 aa).

Substrate-binding positions include 8–15 (RHGESIWN), 21–22 (TG), R60, 87–90 (ERHY), K98, 114–115 (RR), and 183–184 (GN). H9 acts as the Tele-phosphohistidine intermediate in catalysis. E87 functions as the Proton donor/acceptor in the catalytic mechanism.

This sequence belongs to the phosphoglycerate mutase family. BPG-dependent PGAM subfamily. Homodimer.

The catalysed reaction is (2R)-2-phosphoglycerate = (2R)-3-phosphoglycerate. It participates in carbohydrate degradation; glycolysis; pyruvate from D-glyceraldehyde 3-phosphate: step 3/5. Catalyzes the interconversion of 2-phosphoglycerate and 3-phosphoglycerate. In Nitrosomonas europaea (strain ATCC 19718 / CIP 103999 / KCTC 2705 / NBRC 14298), this protein is 2,3-bisphosphoglycerate-dependent phosphoglycerate mutase 2.